A 75-amino-acid chain; its full sequence is Protein SlyX homolog (75 aa).

It belongs to the SlyX family.

The sequence is that of Protein SlyX homolog from Vibrio campbellii (strain ATCC BAA-1116).